We begin with the raw amino-acid sequence, 648 residues long: Solute carrier family 23 member 2 (648 aa).

Residues 1-21 (MMGIGKNTASKSVEAGGSTEG) form a disordered region. Residues 9–110 (ASKSVEAGGS…LCIFLGLQHY (102 aa)) are Cytoplasmic-facing. Position 70 is a phosphoserine (Ser70). Residue Thr75 is modified to Phosphothreonine. Position 78 is a phosphoserine (Ser78). Thr79 bears the Phosphothreonine mark. Ser81 is subject to Phosphoserine. Residues 111–131 (LTCFSGTIAVPFLLADAMCVG) traverse the membrane as a helical segment. Topologically, residues 132-139 (DDQWATSQ) are extracellular. The helical transmembrane segment at 140–160 (LIGTIFFCVGITTLLQTTFGC) threads the bilayer. A topological domain (cytoplasmic) is located at residue Arg161. The helical transmembrane segment at 162-182 (LPLFQASAFAFLAPARAILSL) threads the bilayer. Residues 183–216 (DKWKCNTTEITVANGTAELLEHIWHPRIQEIQGA) are Extracellular-facing. Residues Asn188 and Asn196 are each glycosylated (N-linked (GlcNAc...) asparagine). Residues 217–237 (IIMSSLIEVVIGLLGLPGALL) traverse the membrane as a helical segment. Topologically, residues 238–264 (RYIGPLTITPTVALIGLSGFQAAGERA) are cytoplasmic. Residues 265-282 (GKHWGIAMLTIFLVLLFS) form a helical membrane-spanning segment. Topologically, residues 283–286 (QYAR) are extracellular. The segment at residues 287–300 (NVKFPLPIYKSKKG) is an intramembrane region (helical). Residues 301-307 (WTAYKFQ) lie on the Extracellular side of the membrane. The helical transmembrane segment at 308-328 (LFKMFPIILAILVSWLLCFIF) threads the bilayer. Over 329-369 (TVTDVFPSNSTDYGYYARTDARKGVLLVAPWFKVPYPFQWG) the chain is Cytoplasmic. The helical transmembrane segment at 370-390 (MPTVSAAGVIGMLSAVVASII) threads the bilayer. Topologically, residues 391 to 415 (ESIGDYYACARLSCAPPPPIHAINR) are extracellular. A helical membrane pass occupies residues 416-436 (GIFVEGLSCVLDGIFGTGNGS). The Cytoplasmic segment spans residues 437 to 459 (TSSSPNIGVLGITKVGSRRVIQY). The helical transmembrane segment at 460-480 (GAALMLGLGMVGKFSALFASL) threads the bilayer. At 481-483 (PDP) the chain is on the extracellular side. The chain crosses the membrane as a helical span at residues 484 to 504 (VLGALFCTLFGMITAVGLSNL). Topologically, residues 505 to 514 (QFIDLNSSRN) are cytoplasmic. The helical transmembrane segment at 515–535 (LFVLGFSIFFGLVLPSYLRQN) threads the bilayer. Residues 536–545 (PLVTGITGID) lie on the Extracellular side of the membrane. The chain crosses the membrane as a helical span at residues 546 to 566 (QILNVLLTTAMFVGGCVAFIL). Residues 567 to 648 (DNTIPGTPEE…SSDKDSQATV (82 aa)) lie on the Cytoplasmic side of the membrane. Thr647 bears the Phosphothreonine mark.

This sequence belongs to the nucleobase:cation symporter-2 (NCS2) (TC 2.A.40) family. Interacts with CLSTN3. In terms of processing, phosphorylated. As to expression, expressed in metabolically active and specialized tissues, including high expression in brain and adrenals. Detected in a wide range of tissues. Expression in kidney is almost undetectable.

It is found in the cell membrane. The catalysed reaction is L-ascorbate(out) + 2 Na(+)(out) = L-ascorbate(in) + 2 Na(+)(in). Its function is as follows. Sodium/ascorbate cotransporter. Mediates electrogenic uptake of vitamin C, with a stoichiometry of 2 Na(+) for each ascorbate. The chain is Solute carrier family 23 member 2 (Slc23a2) from Mus musculus (Mouse).